Consider the following 149-residue polypeptide: D-aminoacyl-tRNA deacylase (149 aa).

A Gly-cisPro motif, important for rejection of L-amino acids motif is present at residues 137-138 (GP).

The protein belongs to the DTD family. In terms of assembly, homodimer.

Its subcellular location is the cytoplasm. It catalyses the reaction glycyl-tRNA(Ala) + H2O = tRNA(Ala) + glycine + H(+). The enzyme catalyses a D-aminoacyl-tRNA + H2O = a tRNA + a D-alpha-amino acid + H(+). In terms of biological role, an aminoacyl-tRNA editing enzyme that deacylates mischarged D-aminoacyl-tRNAs. Also deacylates mischarged glycyl-tRNA(Ala), protecting cells against glycine mischarging by AlaRS. Acts via tRNA-based rather than protein-based catalysis; rejects L-amino acids rather than detecting D-amino acids in the active site. By recycling D-aminoacyl-tRNA to D-amino acids and free tRNA molecules, this enzyme counteracts the toxicity associated with the formation of D-aminoacyl-tRNA entities in vivo and helps enforce protein L-homochirality. This chain is D-aminoacyl-tRNA deacylase, found in Geobacter sp. (strain M21).